The primary structure comprises 327 residues: GDP-mannose transporter (327 aa).

At 1-4 (MESS) the chain is on the cytoplasmic side. A helical membrane pass occupies residues 5–25 (LAAIANSGPISIFSYCVSSIL). Residues 26–36 (MTVTNKYVLSG) are Lumenal-facing. The helical transmembrane segment at 37–57 (FSFNMNFLLLAVQSIVCIVTI) threads the bilayer. Topologically, residues 58-78 (GSLKSFGVITYRQFNKEEARK) are cytoplasmic. Residues 79–93 (WSPIAVLLVIMIYTS) traverse the membrane as a helical segment. Topologically, residues 94–102 (SKALQYLSI) are lumenal. The helical transmembrane segment at 103-125 (PVYTIFKNLTIILIAYGEVLWFG) threads the bilayer. Topologically, residues 126 to 131 (GKVTTM) are cytoplasmic. Residues 132-149 (ALSSFLLMVFSSVVAWYG) traverse the membrane as a helical segment. Over 150–163 (DEAVSGSGNESFIA) the chain is Lumenal. The N-linked (GlcNAc...) asparagine glycan is linked to Asn158. The chain crosses the membrane as a helical span at residues 164–184 (LYLGYFWMATNCFASAAFVLI). Topologically, residues 185–207 (MRKRIKLTNFKDFDTMYYNNLLS) are cytoplasmic. Residues 208–228 (IPILLASSIIFEDWSAENLAV) traverse the membrane as a helical segment. Topologically, residues 229 to 238 (NFPSDNRTAT) are lumenal. The N-linked (GlcNAc...) asparagine glycan is linked to Asn234. A helical membrane pass occupies residues 239-259 (IAAMVLSGASSVGISYCSAWC). Over 260–266 (VRVTSST) the chain is Cytoplasmic. The chain crosses the membrane as a helical span at residues 267 to 289 (TYSMVGALNKLPIALSGLVFFPA). Residues 290–292 (AVN) lie on the Lumenal side of the membrane. A helical membrane pass occupies residues 293–312 (FWSVASIFVGFAAGLVYAVA). The Cytoplasmic segment spans residues 313 to 327 (KQRQQKENVSLPSSK).

This sequence belongs to the TPT transporter family. SLC35D subfamily. Homooligomer.

Its subcellular location is the golgi apparatus membrane. It localises to the cytoplasmic vesicle membrane. The protein localises to the endoplasmic reticulum membrane. Involved in the import of GDP-mannose from the cytoplasm into the Golgi lumen. The protein is GDP-mannose transporter (VRG4) of Scheffersomyces stipitis (strain ATCC 58785 / CBS 6054 / NBRC 10063 / NRRL Y-11545) (Yeast).